We begin with the raw amino-acid sequence, 191 residues long: uncharacterized protein (191 aa).

In terms of domain architecture, HTH tetR-type spans 5–65; the sequence is GDSREKILHT…IEAVTYTGKI (61 aa). Positions 28-47 form a DNA-binding region, H-T-H motif; the sequence is GLNQIVKESGAPKGSLYHFF.

This is an uncharacterized protein from Bacillus subtilis (strain 168).